Reading from the N-terminus, the 338-residue chain is Calcium uniporter protein 4, mitochondrial (338 aa).

Residues M1–M36 constitute a mitochondrion transit peptide. The helical transmembrane segment at L233 to W253 threads the bilayer. The short motif at W257–F265 is the Selectivity filter element. E261 serves as a coordination point for Ca(2+). Residues I263–L280 traverse the membrane as a helical segment.

Belongs to the MCU (TC 1.A.77) family.

The protein localises to the mitochondrion inner membrane. It catalyses the reaction Ca(2+)(in) = Ca(2+)(out). Functionally, mitochondrial inner membrane calcium uniporter that mediates calcium uptake into mitochondria. Constitutes a pore-forming and calcium-conducting subunit. Mitochondrial calcium homeostasis plays key roles in cellular physiology and regulates cell bioenergetics, cytoplasmic calcium signals and activation of cell death pathways. This chain is Calcium uniporter protein 4, mitochondrial, found in Arabidopsis thaliana (Mouse-ear cress).